Reading from the N-terminus, the 504-residue chain is Putative lipase ATG15 (504 aa).

Position 1 (Met1) is a topological domain, cytoplasmic. The chain crosses the membrane as a helical; Signal-anchor for type II membrane protein span at residues Leu2–Trp22. Residues His23–Val504 lie on the Lumenal side of the membrane. Asn183 carries an N-linked (GlcNAc...) asparagine glycan. Residue Ser313 is the Charge relay system of the active site. Residues Glu458–Asp484 are disordered. Residues Ser461–Thr483 are compositionally biased toward low complexity.

It belongs to the AB hydrolase superfamily. Lipase family. As to quaternary structure, binds to both phosphatidylinositol (PI) and phosphatidylinositol 3,5-bisphosphate (PIP2).

It is found in the endosome. Its subcellular location is the multivesicular body membrane. It localises to the prevacuolar compartment membrane. The catalysed reaction is a triacylglycerol + H2O = a diacylglycerol + a fatty acid + H(+). Lipase which is essential for lysis of subvacuolar cytoplasm to vacuole targeted bodies and intravacuolar autophagic bodies. Involved in the lysis of intravacuolar multivesicular body (MVB) vesicles. The intravacuolar membrane disintegration by ATG15 is critical to life span extension. This is Putative lipase ATG15 (ATG15) from Candida glabrata (strain ATCC 2001 / BCRC 20586 / JCM 3761 / NBRC 0622 / NRRL Y-65 / CBS 138) (Yeast).